We begin with the raw amino-acid sequence, 109 residues long: MSEFKRISPQQAQELRSNGAVVVDIRDPQSFALGHISGSRHLDNHSLHDFITHADLDAPLIVSCYHGNSSQSAAAYLAGQGFSEVYSLDGGFELWRATFPSETAQGSEE.

The Rhodanese domain maps to 16–104 (RSNGAVVVDI…WRATFPSETA (89 aa)). C64 acts as the Cysteine persulfide intermediate in catalysis.

Belongs to the GlpE family.

It localises to the cytoplasm. The enzyme catalyses thiosulfate + hydrogen cyanide = thiocyanate + sulfite + 2 H(+). It carries out the reaction thiosulfate + [thioredoxin]-dithiol = [thioredoxin]-disulfide + hydrogen sulfide + sulfite + 2 H(+). Its function is as follows. Transferase that catalyzes the transfer of sulfur from thiosulfate to thiophilic acceptors such as cyanide or dithiols. May function in a CysM-independent thiosulfate assimilation pathway by catalyzing the conversion of thiosulfate to sulfite, which can then be used for L-cysteine biosynthesis. The chain is Thiosulfate sulfurtransferase GlpE from Ectopseudomonas mendocina (strain ymp) (Pseudomonas mendocina).